Here is a 230-residue protein sequence, read N- to C-terminus: Porin OmpL (230 aa).

The signal sequence occupies residues 1 to 20 (MKKINAIILLSSLTSASVFA).

It belongs to the oligogalacturonate-specific porin KdgM (TC 1.B.35) family. OmpL subfamily.

It localises to the cell outer membrane. Its function is as follows. Outer membrane channel protein that allows an efficient diffusion of low-molecular-weight solutes such as small sugars and tetraglycine. However, the specific substrate recognized by the OmpL channel is unknown. This Escherichia coli (strain K12) protein is Porin OmpL (ompL).